Reading from the N-terminus, the 242-residue chain is 3-deoxy-manno-octulosonate cytidylyltransferase (242 aa).

Belongs to the KdsB family.

It is found in the cytoplasm. It carries out the reaction 3-deoxy-alpha-D-manno-oct-2-ulosonate + CTP = CMP-3-deoxy-beta-D-manno-octulosonate + diphosphate. It functions in the pathway nucleotide-sugar biosynthesis; CMP-3-deoxy-D-manno-octulosonate biosynthesis; CMP-3-deoxy-D-manno-octulosonate from 3-deoxy-D-manno-octulosonate and CTP: step 1/1. Its pathway is bacterial outer membrane biogenesis; lipopolysaccharide biosynthesis. Its function is as follows. Activates KDO (a required 8-carbon sugar) for incorporation into bacterial lipopolysaccharide in Gram-negative bacteria. The protein is 3-deoxy-manno-octulosonate cytidylyltransferase of Mesorhizobium japonicum (strain LMG 29417 / CECT 9101 / MAFF 303099) (Mesorhizobium loti (strain MAFF 303099)).